The chain runs to 538 residues: Phosphoenolpyruvate carboxykinase (ATP) (538 aa).

Substrate-binding residues include arginine 64, tyrosine 205, and lysine 211. ATP is bound by residues lysine 211, histidine 230, and 246-254; that span reads GLSGTGKTT. Residues lysine 211 and histidine 230 each contribute to the Mn(2+) site. Aspartate 267 contributes to the Mn(2+) binding site. ATP contacts are provided by residues glutamate 295, arginine 331, 447–448, and threonine 453; that span reads RI. Arginine 331 provides a ligand contact to substrate.

Belongs to the phosphoenolpyruvate carboxykinase (ATP) family. Monomer. Mn(2+) serves as cofactor.

It localises to the cytoplasm. The catalysed reaction is oxaloacetate + ATP = phosphoenolpyruvate + ADP + CO2. The protein operates within carbohydrate biosynthesis; gluconeogenesis. Involved in the gluconeogenesis. Catalyzes the conversion of oxaloacetate (OAA) to phosphoenolpyruvate (PEP) through direct phosphoryl transfer between the nucleoside triphosphate and OAA. This Baumannia cicadellinicola subsp. Homalodisca coagulata protein is Phosphoenolpyruvate carboxykinase (ATP).